Consider the following 207-residue polypeptide: Large ribosomal subunit protein uL4 (207 aa).

A disordered region spans residues 49–78 (HAVKNRSAVSGGGRKPWRQKGTGRARQGSI).

It belongs to the universal ribosomal protein uL4 family. In terms of assembly, part of the 50S ribosomal subunit.

Functionally, one of the primary rRNA binding proteins, this protein initially binds near the 5'-end of the 23S rRNA. It is important during the early stages of 50S assembly. It makes multiple contacts with different domains of the 23S rRNA in the assembled 50S subunit and ribosome. In terms of biological role, forms part of the polypeptide exit tunnel. The protein is Large ribosomal subunit protein uL4 of Streptococcus agalactiae serotype Ia (strain ATCC 27591 / A909 / CDC SS700).